The following is a 203-amino-acid chain: Orotate phosphoribosyltransferase (203 aa).

5-phospho-alpha-D-ribose 1-diphosphate contacts are provided by residues Arg94, Lys98, His100, and 120 to 128; that span reads EDLISTGGS. Ser124 serves as a coordination point for orotate.

Belongs to the purine/pyrimidine phosphoribosyltransferase family. PyrE subfamily. Homodimer. The cofactor is Mg(2+).

The enzyme catalyses orotidine 5'-phosphate + diphosphate = orotate + 5-phospho-alpha-D-ribose 1-diphosphate. The protein operates within pyrimidine metabolism; UMP biosynthesis via de novo pathway; UMP from orotate: step 1/2. Catalyzes the transfer of a ribosyl phosphate group from 5-phosphoribose 1-diphosphate to orotate, leading to the formation of orotidine monophosphate (OMP). This chain is Orotate phosphoribosyltransferase, found in Staphylococcus epidermidis (strain ATCC 35984 / DSM 28319 / BCRC 17069 / CCUG 31568 / BM 3577 / RP62A).